A 178-amino-acid chain; its full sequence is ATP synthase subunit b, chloroplastic (178 aa).

Residues 23-43 (IFETNIINLAAVVAIVISFVG) traverse the membrane as a helical segment.

Belongs to the ATPase B chain family. In terms of assembly, F-type ATPases have 2 components, F(1) - the catalytic core - and F(0) - the membrane proton channel. F(1) has five subunits: alpha(3), beta(3), gamma(1), delta(1), epsilon(1). F(0) has four main subunits: a(1), b(1), b'(1) and c(10-14). The alpha and beta chains form an alternating ring which encloses part of the gamma chain. F(1) is attached to F(0) by a central stalk formed by the gamma and epsilon chains, while a peripheral stalk is formed by the delta, b and b' chains.

The protein localises to the plastid. The protein resides in the chloroplast thylakoid membrane. F(1)F(0) ATP synthase produces ATP from ADP in the presence of a proton or sodium gradient. F-type ATPases consist of two structural domains, F(1) containing the extramembraneous catalytic core and F(0) containing the membrane proton channel, linked together by a central stalk and a peripheral stalk. During catalysis, ATP synthesis in the catalytic domain of F(1) is coupled via a rotary mechanism of the central stalk subunits to proton translocation. Its function is as follows. Component of the F(0) channel, it forms part of the peripheral stalk, linking F(1) to F(0). The protein is ATP synthase subunit b, chloroplastic of Tetradesmus obliquus (Green alga).